A 955-amino-acid chain; its full sequence is UvrABC system protein A (955 aa).

35–42 (GLSGSGKS) serves as a coordination point for ATP. ABC transporter domains lie at 322–601 (WGST…EESI) and 621–951 (GHDN…RYLK). Residue 654-661 (GVSGSGKS) participates in ATP binding. The C4-type zinc-finger motif lies at 754-780 (CEACQGDGLIKIEMHFLPDVYVKCDIC).

Belongs to the ABC transporter superfamily. UvrA family. In terms of assembly, forms a heterotetramer with UvrB during the search for lesions.

The protein resides in the cytoplasm. In terms of biological role, the UvrABC repair system catalyzes the recognition and processing of DNA lesions. UvrA is an ATPase and a DNA-binding protein. A damage recognition complex composed of 2 UvrA and 2 UvrB subunits scans DNA for abnormalities. When the presence of a lesion has been verified by UvrB, the UvrA molecules dissociate. The polypeptide is UvrABC system protein A (Rickettsia conorii (strain ATCC VR-613 / Malish 7)).